The following is a 231-amino-acid chain: Pathogenesis-related thaumatin-like protein 3.7 (231 aa).

Residues 1–27 form the signal peptide; sequence MATVSDLALLLVAGLVAISLHMQEAGA. Disulfide bonds link Cys36–Cys230, Cys77–Cys87, Cys92–Cys98, Cys143–Cys218, Cys148–Cys201, Cys156–Cys166, Cys170–Cys179, and Cys180–Cys188.

This sequence belongs to the thaumatin family.

In terms of biological role, may be involved in disease resistance. In Cryptomeria japonica (Japanese cedar), this protein is Pathogenesis-related thaumatin-like protein 3.7.